A 310-amino-acid polypeptide reads, in one-letter code: Aspartate carbamoyltransferase catalytic subunit (310 aa).

2 residues coordinate carbamoyl phosphate: Arg-55 and Thr-56. Residue Lys-85 participates in L-aspartate binding. Carbamoyl phosphate contacts are provided by Arg-106, His-135, and Gln-138. L-aspartate contacts are provided by Arg-168 and Arg-230. Residues Leu-268 and Pro-269 each contribute to the carbamoyl phosphate site.

Belongs to the aspartate/ornithine carbamoyltransferase superfamily. ATCase family. As to quaternary structure, heterododecamer (2C3:3R2) of six catalytic PyrB chains organized as two trimers (C3), and six regulatory PyrI chains organized as three dimers (R2).

The catalysed reaction is carbamoyl phosphate + L-aspartate = N-carbamoyl-L-aspartate + phosphate + H(+). It participates in pyrimidine metabolism; UMP biosynthesis via de novo pathway; (S)-dihydroorotate from bicarbonate: step 2/3. Catalyzes the condensation of carbamoyl phosphate and aspartate to form carbamoyl aspartate and inorganic phosphate, the committed step in the de novo pyrimidine nucleotide biosynthesis pathway. This is Aspartate carbamoyltransferase catalytic subunit from Buchnera aphidicola subsp. Acyrthosiphon pisum (strain APS) (Acyrthosiphon pisum symbiotic bacterium).